The chain runs to 335 residues: Probable peptide ABC transporter ATP-binding protein y4tR (335 aa).

One can recognise an ABC transporter domain in the interval 15-264 (VRDLETHFYG…PTHPYTRALM (250 aa)). ATP is bound at residue 49–56 (GESGCGKS).

The protein belongs to the ABC transporter superfamily.

The protein localises to the cell inner membrane. In terms of biological role, probably part of a binding-protein-dependent transport system y4tOPQRS for a peptide. Probably responsible for energy coupling to the transport system. The polypeptide is Probable peptide ABC transporter ATP-binding protein y4tR (Sinorhizobium fredii (strain NBRC 101917 / NGR234)).